Here is a 562-residue protein sequence, read N- to C-terminus: Scaffold protein FimL (562 aa).

In terms of assembly, interacts with PilG and FimV.

It is found in the cytoplasm. Functionally, regulates multiple virulence functions including type IV pilus (T4P)-mediated assembly and twitching motility as well as cAMP-dependent virulence gene expression. Regulates intracellular cyclic AMP (cAMP) levels through the activation of adenylate cyclase CyaB. Also functions as a scaffold linking FimV and PilG at the pole, where type IV pilus (T4P), the Chp chemosensory system and the CyaB adenylate cyclase interact. This chain is Scaffold protein FimL (fimL), found in Pseudomonas aeruginosa (strain ATCC 15692 / DSM 22644 / CIP 104116 / JCM 14847 / LMG 12228 / 1C / PRS 101 / PAO1).